The chain runs to 355 residues: Peptide chain release factor 1 (355 aa).

At Q233 the chain carries N5-methylglutamine. Residues 281–293 (RRNKEQERADSRR) show a composition bias toward basic and acidic residues. The interval 281-308 (RRNKEQERADSRRGQIGSGDRSERIRTY) is disordered.

It belongs to the prokaryotic/mitochondrial release factor family. Methylated by PrmC. Methylation increases the termination efficiency of RF1.

Its subcellular location is the cytoplasm. Functionally, peptide chain release factor 1 directs the termination of translation in response to the peptide chain termination codons UAG and UAA. The protein is Peptide chain release factor 1 of Rickettsia akari (strain Hartford).